The primary structure comprises 131 residues: Small ribosomal subunit protein uS8 (131 aa).

It belongs to the universal ribosomal protein uS8 family. In terms of assembly, part of the 30S ribosomal subunit. Contacts proteins S5 and S12.

One of the primary rRNA binding proteins, it binds directly to 16S rRNA central domain where it helps coordinate assembly of the platform of the 30S subunit. This Leptothrix cholodnii (strain ATCC 51168 / LMG 8142 / SP-6) (Leptothrix discophora (strain SP-6)) protein is Small ribosomal subunit protein uS8.